The sequence spans 363 residues: NAD(P)H-quinone oxidoreductase subunit 1, chloroplastic (363 aa).

A run of 6 helical transmembrane segments spans residues 26-46 (IIWVLIPIFTPVLGITIGVLV), 98-118 (FSIGPSIAVISILLSYLVIPF), 127-147 (LSIGVFLWIAISSIAPVGLLM), 253-273 (FGLFYVASYLNLLVSSLFVTV), 300-320 (VFGTIIGIFITLAKTYLFLFI), and 336-356 (LLNLGWKFLLPISLGNLLLTT).

The protein belongs to the complex I subunit 1 family. In terms of assembly, NDH is composed of at least 16 different subunits, 5 of which are encoded in the nucleus.

The protein resides in the plastid. It localises to the chloroplast thylakoid membrane. The enzyme catalyses a plastoquinone + NADH + (n+1) H(+)(in) = a plastoquinol + NAD(+) + n H(+)(out). It carries out the reaction a plastoquinone + NADPH + (n+1) H(+)(in) = a plastoquinol + NADP(+) + n H(+)(out). Functionally, NDH shuttles electrons from NAD(P)H:plastoquinone, via FMN and iron-sulfur (Fe-S) centers, to quinones in the photosynthetic chain and possibly in a chloroplast respiratory chain. The immediate electron acceptor for the enzyme in this species is believed to be plastoquinone. Couples the redox reaction to proton translocation, and thus conserves the redox energy in a proton gradient. The chain is NAD(P)H-quinone oxidoreductase subunit 1, chloroplastic from Helianthus annuus (Common sunflower).